Here is a 33-residue protein sequence, read N- to C-terminus: Toxin BcV (33 aa).

An intrachain disulfide couples Cys6 to Cys30.

The protein resides in the secreted. The protein localises to the nematocyst. Its function is as follows. Potently and reversibly blocks mammalian Kv11/KCNH/ERG voltage-gated potassium channels. Acts as a gating-modifier toxin that shifts the voltage-dependence of ERG activation in the positive direction and suppresses its current amplitudes elicited by strong depolarizing pulses that maximally activate the channels. The chain is Toxin BcV from Bunodosoma caissarum (Sea anemone).